We begin with the raw amino-acid sequence, 346 residues long: Very-long-chain 3-oxoacyl-CoA reductase (346 aa).

The helical transmembrane segment at 23–43 (AAWIVFGLGISKMVFLTLNFS) threads the bilayer. Positions 69, 123, 150, 222, 226, 255, and 257 each coordinate NADP(+). Y222 functions as the Proton donor in the catalytic mechanism. The active-site Lowers pKa of active site Tyr is K226.

The protein belongs to the short-chain dehydrogenases/reductases (SDR) family.

Its subcellular location is the endoplasmic reticulum membrane. The catalysed reaction is a very-long-chain (3R)-3-hydroxyacyl-CoA + NADP(+) = a very-long-chain 3-oxoacyl-CoA + NADPH + H(+). The protein operates within lipid metabolism; fatty acid biosynthesis. Component of the microsomal membrane bound fatty acid elongation system, which produces the 26-carbon very long-chain fatty acids (VLCFA) from palmitate. Catalyzes the reduction of the 3-ketoacyl-CoA intermediate that is formed in each cycle of fatty acid elongation. VLCFAs serve as precursors for ceramide and sphingolipids. The protein is Very-long-chain 3-oxoacyl-CoA reductase of Kluyveromyces lactis (strain ATCC 8585 / CBS 2359 / DSM 70799 / NBRC 1267 / NRRL Y-1140 / WM37) (Yeast).